We begin with the raw amino-acid sequence, 293 residues long: ATP synthase subunit gamma, mitochondrial (293 aa).

The N-terminal 21 residues, Met-1–Tyr-21, are a transit peptide targeting the mitochondrion.

F-type ATP synthases have 2 components, the catalytic core F(1) and the membrane-embedded component F(0), linked together by a central stalk and a peripheral stalk. The central stalk, also called rotor shaft, is often seen as part of F(1). The peripheral stalk is seen as part of F(0). F(0) contains the membrane channel next to the rotor. F-type ATP synthases form dimers but each monomer functions independently in ATP generation. The dimer consists of 17 different polypeptides: ATP1 (subunit alpha, 3 molecules per monomer, part of F(1)), ATP2 (subunit beta, 3 copies per monomer, part of F(1)), ATP3 (subunit gamma, part of the central stalk), ATP4 (subunit b, part of the peripheral stalk), ATP5/OSCP (subunit 5/OSCP, part of the peripheral stalk), ATP6 (subunit a, part of the peripheral stalk), ATP7 (subunit d, part of the peripheral stalk), ATP8 (subunit 8, part of the peripheral stalk), OLI1 (subunit c, part of the rotor, 10 molecules per monomer), ATP14 (subunit h, part of the peripheral stalk), ATP15 (subunit epsilon, part of the central stalk), ATP16 (subunit delta, part of the central stalk), ATP17 (subunit f, part of the peripheral stalk), ATP18 (subunit i/j, part of the peripheral stalk), ATP19 (subunit k, dimer-specific, at interface between monomers), ATP20 (subunit g, at interface between monomers), TIM11 (subunit e, at interface between monomers).

The protein localises to the mitochondrion inner membrane. In terms of biological role, mitochondrial membrane ATP synthase (F(1)F(0) ATP synthase or Complex V) produces ATP from ADP in the presence of a proton gradient across the membrane which is generated by electron transport complexes of the respiratory chain. F-type ATP synthases consist of two structural domains, F(1) - containing the extramembraneous catalytic core, and F(0) - containing the membrane proton channel, linked together by a central stalk and a peripheral stalk. During catalysis, ATP synthesis in the catalytic domain of F(1) is coupled via a rotary mechanism of the central stalk subunits to proton translocation. Part of the complex F(1) domain and the central stalk which is part of the complex rotary element. The gamma/ATP3 subunit protrudes into the catalytic domain formed of alpha/ATP1(3)beta/ATP2(3). Rotation of the central stalk against the surrounding alpha/ATP1(3)beta/ATP2(3) subunits leads to hydrolysis of ATP in three separate catalytic sites on the beta/ATP2 subunits. The sequence is that of ATP synthase subunit gamma, mitochondrial from Yarrowia lipolytica (strain CLIB 122 / E 150) (Yeast).